Here is a 598-residue protein sequence, read N- to C-terminus: Elongation factor 4 (598 aa).

A tr-type G domain is found at 2–184 (KQIRNFSIIA…RLVKEIPAPE (183 aa)). Residues 14 to 19 (DHGKST) and 131 to 134 (NKID) each bind GTP.

It belongs to the TRAFAC class translation factor GTPase superfamily. Classic translation factor GTPase family. LepA subfamily.

The protein localises to the cell inner membrane. It carries out the reaction GTP + H2O = GDP + phosphate + H(+). Functionally, required for accurate and efficient protein synthesis under certain stress conditions. May act as a fidelity factor of the translation reaction, by catalyzing a one-codon backward translocation of tRNAs on improperly translocated ribosomes. Back-translocation proceeds from a post-translocation (POST) complex to a pre-translocation (PRE) complex, thus giving elongation factor G a second chance to translocate the tRNAs correctly. Binds to ribosomes in a GTP-dependent manner. This Photorhabdus laumondii subsp. laumondii (strain DSM 15139 / CIP 105565 / TT01) (Photorhabdus luminescens subsp. laumondii) protein is Elongation factor 4.